Consider the following 372-residue polypeptide: Histidinol-phosphate aminotransferase (372 aa).

Residue Lys-230 is modified to N6-(pyridoxal phosphate)lysine.

Belongs to the class-II pyridoxal-phosphate-dependent aminotransferase family. Histidinol-phosphate aminotransferase subfamily. In terms of assembly, homodimer. The cofactor is pyridoxal 5'-phosphate.

The enzyme catalyses L-histidinol phosphate + 2-oxoglutarate = 3-(imidazol-4-yl)-2-oxopropyl phosphate + L-glutamate. It functions in the pathway amino-acid biosynthesis; L-histidine biosynthesis; L-histidine from 5-phospho-alpha-D-ribose 1-diphosphate: step 7/9. This Paenarthrobacter aurescens (strain TC1) protein is Histidinol-phosphate aminotransferase.